The chain runs to 514 residues: Membrane-bound lytic murein transglycosylase F (514 aa).

The first 30 residues, 1 to 30, serve as a signal peptide directing secretion; that stretch reads MLSNNPLITKFRELFTVALVLALLSGCQWQ. The non-LT domain stretch occupies residues 31–271; it reads DDNLTDLEKI…QLEEKYFGHV (241 aa). The LT domain stretch occupies residues 272-514; that stretch reads GSFDYVDTRA…KTIEDPGPSQ (243 aa). Residue glutamate 316 is part of the active site. Residues 482–514 form a disordered region; the sequence is PVPPRQANVDGSLNNEAAISSAEKTIEDPGPSQ. The segment covering 490-499 has biased composition (polar residues); that stretch reads VDGSLNNEAA.

This sequence in the N-terminal section; belongs to the bacterial solute-binding protein 3 family. It in the C-terminal section; belongs to the transglycosylase Slt family.

The protein localises to the cell outer membrane. It carries out the reaction Exolytic cleavage of the (1-&gt;4)-beta-glycosidic linkage between N-acetylmuramic acid (MurNAc) and N-acetylglucosamine (GlcNAc) residues in peptidoglycan, from either the reducing or the non-reducing ends of the peptidoglycan chains, with concomitant formation of a 1,6-anhydrobond in the MurNAc residue.. Functionally, murein-degrading enzyme that degrades murein glycan strands and insoluble, high-molecular weight murein sacculi, with the concomitant formation of a 1,6-anhydromuramoyl product. Lytic transglycosylases (LTs) play an integral role in the metabolism of the peptidoglycan (PG) sacculus. Their lytic action creates space within the PG sacculus to allow for its expansion as well as for the insertion of various structures such as secretion systems and flagella. The sequence is that of Membrane-bound lytic murein transglycosylase F from Photobacterium profundum (strain SS9).